The chain runs to 694 residues: Protein NPGR1 (694 aa).

A disordered region spans residues 12-40 (FEDQPGSPESLATRDFSASGLSSRNGGGD). TPR repeat units follow at residues 32-65 (LSSRNGGGDWDSKLEDIQVDEAESTLKEALSLNY), 66-101 (EEARALLGRLEYQRGNFDAALQVFKGIDIKVLTPRI), 135-168 (LEAILLKARSLEELGSYKEAAEECKIILDVVENA), 188-221 (QKALELLPLLWKKAGNHHETIASYRRALSRPWNL), 307-340 (GERWYLLSLCYSAAGIDKAAINLLKMALGPSESR), 551-584 (TEAWQDLASVYGKLGSWSDAETCLEKARSMCYYS), 585-618 (PRGWNETGLCLEAKSLHEEALISFFLSLSIEPDH), 620-654 (PSIVSIAEVMMKSGDESLPTAKSFLMNALRLDPRN), and 655-688 (HDAWMKLGHVAKKQGLSQQAAEFYQAAYELELSA).

In terms of assembly, interacts with calmodulin in a calcium-dependent manner. In terms of tissue distribution, expressed in pollen, flowers, fruits and leaves.

In Arabidopsis thaliana (Mouse-ear cress), this protein is Protein NPGR1.